The following is a 183-amino-acid chain: Translation initiation factor IF-3 (183 aa).

This sequence belongs to the IF-3 family. In terms of assembly, monomer.

Its subcellular location is the cytoplasm. IF-3 binds to the 30S ribosomal subunit and shifts the equilibrium between 70S ribosomes and their 50S and 30S subunits in favor of the free subunits, thus enhancing the availability of 30S subunits on which protein synthesis initiation begins. This Pseudomonas entomophila (strain L48) protein is Translation initiation factor IF-3.